Here is a 201-residue protein sequence, read N- to C-terminus: Ras-related protein Rab-10 (201 aa).

Position 16–23 (16–23) interacts with GTP; that stretch reads GDSGVGKT. An Effector region motif is present at residues 38–46; that stretch reads FISTIGIDF. Residues 64 to 68, 122 to 125, and 152 to 154 contribute to the GTP site; these read DTAGQ, NKCD, and SAK. Residues 175–201 form a disordered region; that stretch reads PDSTDEQSRDTVNPVQPQRQSSSGGCC. The span at 184-201 shows a compositional bias: polar residues; sequence DTVNPVQPQRQSSSGGCC. 2 S-geranylgeranyl cysteine lipidation sites follow: C200 and C201.

The protein belongs to the small GTPase superfamily. Rab family. Interacts (GTP-bound form) with ehbp-1 (via C-terminal coiled coil). Interacts (GTP-bound form) with cnt-1 (via C-terminal ankyrin repeat). Interacts (GTP-bound form) with rab-5 GAP, tbc-2 (via putative coiled coil domain). Interacts (GTP-bound form) with amph-1. As to expression, almost ubiquitously expressed. Expressed in intestine, hypodermis, seam cells, body-wall muscles, many neurons, oviduct sheath cell, spermatheca, coelomocytes and pharyngeal and nerve ring.

Its subcellular location is the early endosome membrane. The protein resides in the late endosome membrane. It localises to the golgi apparatus membrane. It is found in the endosome membrane. It catalyses the reaction GTP + H2O = GDP + phosphate + H(+). With respect to regulation, rab activation is generally mediated by a guanine exchange factor (GEF), while inactivation through hydrolysis of bound GTP is catalyzed by a GTPase activating protein (GAP). Tbc-4 is a likely GAP of this rab. Denn-4 is a putative GEF of this rab. In terms of biological role, the small GTPases Rab are key regulators of intracellular membrane trafficking, from the formation of transport vesicles to their fusion with membranes. Rabs cycle between an inactive GDP-bound form and an active GTP-bound form that is able to recruit to membranes different set of downstream effectors directly responsible for vesicle formation, movement, tethering and fusion. Required for basolateral endocytic recycling, the return of macromolecules and fluid from endosomes to the plasma membrane, in polarized epithelial cells of the intestine upstream of rme-1. Involved in the formation of the endosomal tubular network that is required for basolateral recycling of clathrin-independent endocytic cargo such as daf-4 in the intestine. Required for the recruitment of cnt-1 effector to endosomal membranes in the intestinal epithelium, which is important for the regulation of levels of endosomal phosphatidylinositol-4,5-bisphosphate, a key phosphoinositide in membrane traffic, and for the recruitment of endosomal membrane-bending proteins, rme-1 and sdpn-1. Recruits the rab-5 GTPase-activating protein tbc-2 to endosomes where it then inactivates rab-5 resulting in removal of rab-5 from membranes, which is necessary for cargo transport from early endosomes to recycling endosomes in the basolateral intestine. Regulates recycling of synaptic membrane AMPA glutamate receptor, glr-1, from intracellular endosomal compartments back to synapses in a cholesterol-dependent endocytosis pathway functioning after clathrin-independent endocytosis in command interneurons. Regulates neuropeptide release from dense core vesicles (DCVs) of cholinergic motoneurons in cooperation with rab-5. They reciprocally recruit each other's inactivating GAP molecule leading to local exclusion of one or the other rab protein at the Golgi-endosomal interphase at an essential stage during DCV sorting. Regulates membrane trafficking of membranes and dendrite proteins from the Golgi and/or endosomal compartments to plasma membrane during dendrite morphogenesis together with the exocyst complex in the multi-dendritic PVD sensory neurons acting in a cell-autonomous manner and requiring its GTPase activity. Functions cell-autonomously together with the exocyst complex to regulate dendrite morphogenesis and anterior-posterior patterning of the PVD neurons dendritic arbor by balancing the anterograde and retrograde transport via molecular motors unc-116 (kinesin heavy chain) and dhc-1 (dynein heavy chain) to appropriately transport branching factors, such as dma-1, to the specific subcellular regions of the developing dendrite in its GTPase activity-dependent manner. This Caenorhabditis elegans protein is Ras-related protein Rab-10.